Here is a 552-residue protein sequence, read N- to C-terminus: Membrane protein insertase YidC (552 aa).

A helical membrane pass occupies residues 3-23 (TKRLILFVIFSFSILMLWDSW). The interval 29–65 (PPAASQTQTTAQSVEDGSVPQAAKSSASAANQASVPA) is disordered. 4 consecutive transmembrane segments (helical) span residues 359 to 379 (WGVAIILLTILIKLVFYPLSA), 429 to 449 (LPILVQIPVFIALYWVLLGSV), 463 to 483 (LSAVDPYYVLPILMGITMIIQ), and 503 to 523 (PIVFSVFFFFFPAGLVLYWLV).

Belongs to the OXA1/ALB3/YidC family. Type 1 subfamily. In terms of assembly, interacts with the Sec translocase complex via SecD. Specifically interacts with transmembrane segments of nascent integral membrane proteins during membrane integration.

It localises to the cell inner membrane. Functionally, required for the insertion and/or proper folding and/or complex formation of integral membrane proteins into the membrane. Involved in integration of membrane proteins that insert both dependently and independently of the Sec translocase complex, as well as at least some lipoproteins. Aids folding of multispanning membrane proteins. The chain is Membrane protein insertase YidC from Methylobacillus flagellatus (strain ATCC 51484 / DSM 6875 / VKM B-1610 / KT).